The primary structure comprises 280 residues: Protein phosphatase 1 regulatory subunit 3B-A (280 aa).

A PP1-binding motif motif is present at residues 58 to 61; it reads RVSF. The CBM21 domain maps to 121–229; it reads RNRLQADSVC…SNKSLNYKIA (109 aa).

Interacts with glycogen, PPP1CC catalytic subunit of PP1 and PYGL. Associates with glycogen particles. Forms complexes with debranching enzyme, glycogen phosphorylase, glycogen synthase and phosphorylase kinase which is necessary for its regulation of PP1 activity.

Its function is as follows. Acts as a glycogen-targeting subunit for phosphatase PP1. Facilitates interaction of the PP1 with enzymes of the glycogen metabolism and regulates its activity. Suppresses the rate at which PP1 dephosphorylates (inactivates) glycogen phosphorylase and enhances the rate at which it activates glycogen synthase and therefore limits glycogen breakdown. The sequence is that of Protein phosphatase 1 regulatory subunit 3B-A (ppp1r3b-a) from Xenopus laevis (African clawed frog).